The chain runs to 152 residues: Transcriptional regulator MraZ (152 aa).

2 SpoVT-AbrB domains span residues 5-52 (TSAI…PLPE) and 81-124 (ASDC…HDTA).

It belongs to the MraZ family. Forms oligomers.

The protein localises to the cytoplasm. Its subcellular location is the nucleoid. In Colwellia psychrerythraea (strain 34H / ATCC BAA-681) (Vibrio psychroerythus), this protein is Transcriptional regulator MraZ.